Consider the following 106-residue polypeptide: Violacin-A (106 aa).

Residues 1–29 (MDAQKMKMVIGLVLVATTAFALMIPAASA) form the signal peptide. The propeptide occupies 30–79 (VDDFITRRAYDNLVKSGAIKDIPVMAKTIISNPVLEEGMLTYYTNKKLGD). Intrachain disulfides connect Cys-84–Cys-98, Cys-88–Cys-100, and Cys-93–Cys-105.

This sequence belongs to the cyclotide family. Moebius subfamily. Violacin-A is not a cyclic peptide.

Functionally, probably participates in a plant defense mechanism. Has low hemolytic activity. This Viola odorata (Sweet violet) protein is Violacin-A.